Here is a 101-residue protein sequence, read N- to C-terminus: MSISSAVDQYTVLTGDRSKIKDLLCSRLTECGWRDEVRLMCRNILIEKGTNNSFTVEQLIAEVTPKARTLVPDAVKKELLMKIRTILTEIEEEADEPEDES.

The protein belongs to the ENY2 family. In terms of assembly, component of the nuclear pore complex (NPC)-associated AMEX complex (anchoring and mRNA export complex), composed of at least e(y)2 and xmas-2. Component of the SAGA transcription coactivator-HAT complexes, at least composed of Ada2b, e(y)2, Pcaf/Gcn5, Taf10 and Nipped-A/Trrap. Within the SAGA complex, e(y)2, Sgf11, and not/nonstop form an additional subcomplex of SAGA called the DUB module (deubiquitination module). Component of the THO complex, composed of at least e(y)2, HPR1, THO2, THOC5, THOC6 and THOC7. Interacts with e(y)1. Interacts with su(Hw) (via zinc fingers). Interacts with xmas-2; required for localization to the nuclear periphery. Interacts with the nuclear pore complex (NPC).

The protein localises to the nucleus. The protein resides in the nucleoplasm. It is found in the cytoplasm. Its function is as follows. Involved in mRNA export coupled transcription activation by association with both the AMEX and the SAGA complexes. The SAGA complex is a multiprotein complex that activates transcription by remodeling chromatin and mediating histone acetylation and deubiquitination. Within the SAGA complex, participates in a subcomplex that specifically deubiquitinates histone H2B. The SAGA complex is recruited to specific gene promoters by activators, where it is required for transcription. Required for nuclear receptor-mediated transactivation. Involved in transcription elongation by recruiting the THO complex onto nascent mRNA. The AMEX complex functions in docking export-competent ribonucleoprotein particles (mRNPs) to the nuclear entrance of the nuclear pore complex (nuclear basket). AMEX participates in mRNA export and accurate chromatin positioning in the nucleus by tethering genes to the nuclear periphery. The chain is Enhancer of yellow 2 transcription factor from Drosophila sechellia (Fruit fly).